Here is a 72-residue protein sequence, read N- to C-terminus: Protein CYSTEINE-RICH TRANSMEMBRANE MODULE 9 (72 aa).

The segment covering 1 to 22 (MNPSEQNHLSVEKPSQTSSGPY) has biased composition (polar residues). The tract at residues 1-46 (MNPSEQNHLSVEKPSQTSSGPYTSPPPIGYPTRDAMVGDPPAAAVE) is disordered. A helical transmembrane segment spans residues 49 to 65 (SKGDGFWKGCCAAICCC).

Belongs to the CYSTM1 family. In terms of assembly, heterodimers. Interacts with WIH1/CYSTM13. As to expression, mostly expressed in roots and flowers and, to a lower extent, in stems, siliques and leaves.

It localises to the cell membrane. Its subcellular location is the nucleus. Functionally, involved in resistance to abiotic stress. In Arabidopsis thaliana (Mouse-ear cress), this protein is Protein CYSTEINE-RICH TRANSMEMBRANE MODULE 9.